The following is a 1482-amino-acid chain: Glutamate receptor ionotropic, NMDA 2B (1482 aa).

A signal peptide spans 1 to 26 (MKPSAECCSPKFWLVLAVLAVSGSKA). Topologically, residues 27–557 (RSQKSAPSIG…SAFLEPFSAD (531 aa)) are extracellular. A glycan (N-linked (GlcNAc...) asparagine) is linked at Asn-74. Cysteines 86 and 321 form a disulfide. The Zn(2+) site is built by His-127 and Glu-284. Residues Asn-341, Asn-348, Asn-444, and Asn-491 are each glycosylated (N-linked (GlcNAc...) asparagine). 2 disulfide bridges follow: Cys-429–Cys-456 and Cys-436–Cys-457. Residues Thr-514 and Arg-519 each coordinate L-glutamate. Residue Asn-542 is glycosylated (N-linked (GlcNAc...) asparagine). A helical transmembrane segment spans residues 558 to 576 (VWVMMFVMLLIVSAVAVFV). Residues 577–603 (FEYFSPVGYNRCLADGREPGGPSFTIG) are Cytoplasmic-facing. An intramembrane region (discontinuously helical) is located at residues 604–623 (KAIWLLWGLVFNNSVPVQNP). The pore-forming stretch occupies residues 604–623 (KAIWLLWGLVFNNSVPVQNP). Over 624–630 (KGTTSKI) the chain is Cytoplasmic. A helical transmembrane segment spans residues 631–646 (MVSVWAFFAVIFLASY). The Extracellular segment spans residues 647-817 (TANLAAFMIQ…VMSSQLDIDN (171 aa)). Asn-688 carries an N-linked (GlcNAc...) asparagine glycan. Residues 690–691 (ST) and Asp-732 each bind L-glutamate. Cys-746 and Cys-801 are joined by a disulfide. The chain crosses the membrane as a helical span at residues 818–837 (MAGVFYMLGAAMALSLITFI). At 838 to 1482 (CEHLFYWQFR…EKLSSIESDV (645 aa)) the chain is on the cytoplasmic side. Phosphoserine occurs at positions 882, 886, 917, and 920. Phosphotyrosine is present on residues Tyr-962 and Tyr-1039. Ser-1058, Ser-1061, and Ser-1064 each carry phosphoserine. Positions 1074 to 1097 (EGNAAKRRKQQYKDSLKKRPASAK) are disordered. Phosphotyrosine occurs at positions 1109 and 1133. At Ser-1143 the chain carries Phosphoserine. Phosphotyrosine is present on Tyr-1155. A disordered region spans residues 1162–1194 (FKRDSVSGGGPCTNRSHLKHGTGDKHGVVGGVP). 2 positions are modified to phosphoserine: Ser-1255 and Ser-1259. Residues 1266-1277 (PAAPVAVSSNAS) show a composition bias toward low complexity. Positions 1266-1301 (PAAPVAVSSNASTTKYPQSPTNSKAQKKNRNKLRRQ) are disordered. Residues 1278–1289 (TTKYPQSPTNSK) show a composition bias toward polar residues. A compositionally biased stretch (basic residues) spans 1290 to 1301 (AQKKNRNKLRRQ). Positions 1292–1304 (KKNRNKLRRQHSY) are interaction with DAPK1. Ser-1303 carries the post-translational modification Phosphoserine; by DAPK1. Tyr-1472 carries the phosphotyrosine modification. The PDZ-binding motif lies at 1480-1482 (SDV).

This sequence belongs to the glutamate-gated ion channel (TC 1.A.10.1) family. NR2B/GRIN2B subfamily. In terms of assembly, heterotetramer. Forms heterotetrameric channels composed of two GluN1/zeta subunits (GRIN1), and two identical GluN2/epsilon subunits (GRIN2A, GRIN2B, GRIN2C or GRIN2D) or GluN3 subunits (GRIN3A or GRIN3B) (in vitro). Can also form heterotetrameric channels that contain at least two GluN1 subunits and at least two different GluN2 subunits (or a combination of one GluN2 and one GluN3 subunits) (in vitro). In vivo, the subunit composition may depend on the expression levels of the different subunits. Found in a complex with GRIN1, GRIN3A and PPP2CB. Interacts with MAGI3. Interacts with HIP1 and NETO1. Interacts with PDZ domains of PATJ, DLG3 and DLG4. Interacts with DAPK1. Found in a complex with GRIN1 and PRR7. Interacts with PRR7. Interacts with CAMK2A. Interacts with ARC; preventing ARC oligomerization. Interacts with TMEM25. Interacts (via the extreme C-terminus) with FRMPD2 (via the second PDZ domain); the interaction is direct and is likely to promote NMDAR-mediated neural signal transmission. GRIN2A binds FRMPD2 with lower affinity than GRIN2B. Interacts with FAM81A; the interaction facilitates condensate formation via liquid-liquid phase separation. Phosphorylated on tyrosine residues. Phosphorylation at Ser-1303 by DAPK1 enhances synaptic NMDA receptor channel activity. Detected in brain (at protein level). Detected throughout the brain, and in brain stem trigeminal nucleus. Detected in forebrain.

Its subcellular location is the cell membrane. The protein resides in the postsynaptic cell membrane. It is found in the cell projection. The protein localises to the dendrite. It localises to the late endosome. Its subcellular location is the lysosome. The protein resides in the cytoplasm. It is found in the cytoskeleton. The catalysed reaction is Ca(2+)(in) = Ca(2+)(out). The enzyme catalyses Na(+)(in) = Na(+)(out). It catalyses the reaction K(+)(in) = K(+)(out). Component of N-methyl-D-aspartate (NMDA) receptors (NMDARs) that function as heterotetrameric, ligand-gated cation channels with high calcium permeability and voltage-dependent block by Mg(2+). Participates in synaptic plasticity for learning and memory formation by contributing to the long-term depression (LTD) of hippocampus membrane currents. Channel activation requires binding of the neurotransmitter L-glutamate to the GluN2 subunit, glycine or D-serine binding to the GluN1 subunit, plus membrane depolarization to eliminate channel inhibition by Mg(2+). NMDARs mediate simultaneously the potasium efflux and the influx of calcium and sodium. Each GluN2 subunit confers differential attributes to channel properties, including activation, deactivation and desensitization kinetics, pH sensitivity, Ca2(+) permeability, and binding to allosteric modulators. In concert with DAPK1 at extrasynaptic sites, acts as a central mediator for stroke damage. Its phosphorylation at Ser-1303 by DAPK1 enhances synaptic NMDA receptor channel activity inducing injurious Ca2+ influx through them, resulting in an irreversible neuronal death. The protein is Glutamate receptor ionotropic, NMDA 2B of Mus musculus (Mouse).